The primary structure comprises 360 residues: Protein Wnt-2 (360 aa).

The signal sequence occupies residues 1-25 (MNAPLGGIWLGLPLLLTWLSPEVSS). 11 cysteine pairs are disulfide-bonded: Cys-76–Cys-87, Cys-127–Cys-135, Cys-137–Cys-157, Cys-206–Cys-220, Cys-208–Cys-215, Cys-278–Cys-309, Cys-294–Cys-304, Cys-308–Cys-348, Cys-324–Cys-339, Cys-326–Cys-336, and Cys-331–Cys-332. Ser-212 carries the O-palmitoleoyl serine; by PORCN lipid modification. The N-linked (GlcNAc...) asparagine glycan is linked to Asn-295.

This sequence belongs to the Wnt family. In terms of processing, palmitoleoylation is required for efficient binding to frizzled receptors. Depalmitoleoylation leads to Wnt signaling pathway inhibition.

Its subcellular location is the secreted. It is found in the extracellular space. It localises to the extracellular matrix. Its function is as follows. Ligand for members of the frizzled family of seven transmembrane receptors. Probable developmental protein. May be a signaling molecule which affects the development of discrete regions of tissues. Is likely to signal over only few cell diameters. The sequence is that of Protein Wnt-2 (WNT2) from Oryctolagus cuniculus (Rabbit).